Reading from the N-terminus, the 598-residue chain is MAAKQGSFRHGILEKRERLLSNNGFSDFRFTDIESNDLLENENCGRRTRLCCCCSCGNLSEKISGVYDDAKDVARKAWEMGVSDPRKIVFSAKIGLALTIVALLIFYQEPNPDLSRYSVWAILTVVVVFEFTIGATLSKGFNRALGTLSAGGLALGMAELSTLFGDWEEIFCTLSIFCIGFLATFMKLYPSMKAYEYGFRVFLLTYCYILISGFRTGQFIEVAISRFLLIALGAGVSLGVNMFIYPIWAGEDLHNLVVKNFMNVATSLEGCVNGYLRCLEYERIPSKILTYQASEDPVYKGYRSAVESTSQEESLMSFAIWEPPHGPYKSFNYPWKNYVKLSGALKHCAFTVMALHGCILSEIQAPEERRQVFRQELQRVGVEGAKLLRELGEKVKKMEKLGPVDLLFEVHLAAEELQHKIDKKSYLLVNSECWEIGNRATKESEPQELLSLEDSDPPENHAPPIYAFKSLSEAVLEIPPSWGEKNHREALNHRPTFSKQVSWPARLVLPPHLETTNGASPLVETTKTYESASALSLATFASLLIEFVARLQNVVDAFKELSQKANFKEPEIVTTGTDVEFSGERVGLGQKIRRCFGM.

Transmembrane regions (helical) follow at residues isoleucine 88–glutamine 108, tyrosine 117–leucine 137, alanine 144–phenylalanine 164, isoleucine 170–proline 190, alanine 194–phenylalanine 214, and phenylalanine 227–isoleucine 247.

It belongs to the aromatic acid exporter (TC 2.A.85) family. In terms of tissue distribution, expressed in hypocotyls, leaves, roots, flowers, sepals and stamina. In leaves, expressed almost exclusively in mesophyll cells.

Its subcellular location is the vacuole membrane. Its activity is regulated as follows. Slow activation by external aluminum. Vacuolar malate channel. Has a higher selectivity for malate than for fumarate. Also exhibits a weak chloride conductance. The chain is Aluminum-activated malate transporter 9 (ALMT9) from Arabidopsis thaliana (Mouse-ear cress).